Reading from the N-terminus, the 477-residue chain is Glycogen synthase (477 aa).

Lysine 15 is a binding site for ADP-alpha-D-glucose.

The protein belongs to the glycosyltransferase 1 family. Bacterial/plant glycogen synthase subfamily.

The enzyme catalyses [(1-&gt;4)-alpha-D-glucosyl](n) + ADP-alpha-D-glucose = [(1-&gt;4)-alpha-D-glucosyl](n+1) + ADP + H(+). The protein operates within glycan biosynthesis; glycogen biosynthesis. In terms of biological role, synthesizes alpha-1,4-glucan chains using ADP-glucose. The chain is Glycogen synthase from Streptococcus pneumoniae serotype 2 (strain D39 / NCTC 7466).